The following is a 536-amino-acid chain: Protein ST7 homolog (536 aa).

2 consecutive transmembrane segments (helical) span residues 3-23 (CSWT…LFAL) and 49-69 (FYVA…IFEW). The stretch at 191-218 (LAEEESETVSQAENLLRRALRAIESTLN) forms a coiled coil. A helical transmembrane segment spans residues 465 to 485 (TLMMLLQTFICLAICILAVLA).

This sequence belongs to the ST7 family.

It localises to the membrane. The protein is Protein ST7 homolog of Caenorhabditis elegans.